The following is a 651-amino-acid chain: tRNA uridine 5-carboxymethylaminomethyl modification enzyme MnmG (651 aa).

11–16 provides a ligand contact to FAD; the sequence is GAGHAG. 296-310 lines the NAD(+) pocket; sequence GPRYCPSIEDKIVRF.

Belongs to the MnmG family. Homodimer. Heterotetramer of two MnmE and two MnmG subunits. Requires FAD as cofactor.

It is found in the cytoplasm. In terms of biological role, NAD-binding protein involved in the addition of a carboxymethylaminomethyl (cmnm) group at the wobble position (U34) of certain tRNAs, forming tRNA-cmnm(5)s(2)U34. This is tRNA uridine 5-carboxymethylaminomethyl modification enzyme MnmG from Chloroflexus aurantiacus (strain ATCC 29366 / DSM 635 / J-10-fl).